Here is a 150-residue protein sequence, read N- to C-terminus: Troponin C, isoform 1 (150 aa).

Met-1 carries the post-translational modification N-acetylmethionine. 4 EF-hand domains span residues 7–42 (DQVQ…MGVK), 43–78 (ISDR…FLSE), 83–118 (ALKK…LDNK), and 119–150 (LTED…MMNG). Residues Asp-56, Asp-58, Ser-60, Glu-62, and Glu-67 each coordinate Ca(2+). Positions 132, 134, 136, 138, and 143 each coordinate Ca(2+).

The protein belongs to the troponin C family.

In terms of biological role, troponin is the central regulatory protein of striated muscle contraction. Tn consists of three components: Tn-I which is the inhibitor of actomyosin ATPase, Tn-T which contains the binding site for tropomyosin and Tn-C. The binding of calcium to Tn-C abolishes the inhibitory action of Tn on actin filaments. The sequence is that of Troponin C, isoform 1 from Homarus americanus (American lobster).